The primary structure comprises 469 residues: Interstitial collagenase (469 aa).

The first 18 residues, 1–18 (MPRLPLLLLLLWGTGSHG), serve as a signal peptide directing secretion. Positions 19 to 99 (FPAATSETQE…PRCGVPDVAP (81 aa)) are cleaved as a propeptide — activation peptide. The Cysteine switch motif lies at 90-97 (PRCGVPDV). A Zn(2+)-binding site is contributed by cysteine 92. Asparagine 120 is a glycosylation site (N-linked (GlcNAc...) asparagine). Ca(2+) is bound by residues aspartate 124 and aspartate 158. Residues histidine 168 and aspartate 170 each coordinate Zn(2+). Positions 175, 176, 178, and 180 each coordinate Ca(2+). Histidine 183 contributes to the Zn(2+) binding site. Glycine 190, glycine 192, and aspartate 194 together coordinate Ca(2+). Histidine 196 serves as a coordination point for Zn(2+). The Ca(2+) site is built by aspartate 198, aspartate 199, and glutamate 201. A Zn(2+)-binding site is contributed by histidine 218. Residue glutamate 219 is part of the active site. Positions 222 and 228 each coordinate Zn(2+). Threonine 274 bears the Phosphothreonine mark. Hemopexin repeat units follow at residues 275-324 (PEVC…WPQL), 325-371 (PNGL…FGFP), 374-422 (VKSI…FPGI), and 423-466 (GNKV…WFNC). Cysteine 278 and cysteine 466 are disulfide-bonded. Ca(2+) is bound by residues aspartate 285 and glutamine 329. A Phosphotyrosine; by PKDCC modification is found at tyrosine 360. Aspartate 378 and aspartate 427 together coordinate Ca(2+).

It belongs to the peptidase M10A family. Ca(2+) serves as cofactor. It depends on Zn(2+) as a cofactor. Tyrosine phosphorylated in platelets by PKDCC/VLK.

It localises to the secreted. The protein localises to the extracellular space. The protein resides in the extracellular matrix. It catalyses the reaction Cleavage of the triple helix of collagen at about three-quarters of the length of the molecule from the N-terminus, at 775-Gly-|-Ile-776 in the alpha1(I) chain. Cleaves synthetic substrates and alpha-macroglobulins at bonds where P1' is a hydrophobic residue.. Can be activated without removal of the activation peptide. In terms of biological role, cleaves collagens of types I, II, and III at one site in the helical domain. Also cleaves collagens of types VII and X. The chain is Interstitial collagenase (MMP1) from Bos taurus (Bovine).